A 257-amino-acid chain; its full sequence is tRNA (guanine-N(7)-)-methyltransferase (257 aa).

The span at methionine 1–threonine 12 shows a compositional bias: acidic residues. The segment at methionine 1–serine 25 is disordered. S-adenosyl-L-methionine is bound by residues glycine 80, glutamate 103 to isoleucine 104, asparagine 138 to alanine 139, and leucine 158. Aspartate 161 is a catalytic residue. Serine 236–glutamate 238 lines the S-adenosyl-L-methionine pocket.

This sequence belongs to the class I-like SAM-binding methyltransferase superfamily. TrmB family.

The protein localises to the nucleus. It catalyses the reaction guanosine(46) in tRNA + S-adenosyl-L-methionine = N(7)-methylguanosine(46) in tRNA + S-adenosyl-L-homocysteine. The protein operates within tRNA modification; N(7)-methylguanine-tRNA biosynthesis. Catalyzes the formation of N(7)-methylguanine at position 46 (m7G46) in tRNA. The sequence is that of tRNA (guanine-N(7)-)-methyltransferase from Drosophila ananassae (Fruit fly).